We begin with the raw amino-acid sequence, 289 residues long: Light-independent protochlorophyllide reductase iron-sulfur ATP-binding protein (289 aa).

ATP is bound by residues 10 to 15 (GIGKST) and K39. S14 contributes to the Mg(2+) binding site. The [4Fe-4S] cluster site is built by C95 and C129. 180 to 181 (NR) contacts ATP.

It belongs to the NifH/BchL/ChlL family. In terms of assembly, homodimer. Protochlorophyllide reductase is composed of three subunits; ChlL, ChlN and ChlB. [4Fe-4S] cluster serves as cofactor.

The protein localises to the plastid. It is found in the chloroplast. The catalysed reaction is chlorophyllide a + oxidized 2[4Fe-4S]-[ferredoxin] + 2 ADP + 2 phosphate = protochlorophyllide a + reduced 2[4Fe-4S]-[ferredoxin] + 2 ATP + 2 H2O. The protein operates within porphyrin-containing compound metabolism; chlorophyll biosynthesis (light-independent). Functionally, component of the dark-operative protochlorophyllide reductase (DPOR) that uses Mg-ATP and reduced ferredoxin to reduce ring D of protochlorophyllide (Pchlide) to form chlorophyllide a (Chlide). This reaction is light-independent. The L component serves as a unique electron donor to the NB-component of the complex, and binds Mg-ATP. The protein is Light-independent protochlorophyllide reductase iron-sulfur ATP-binding protein of Marchantia polymorpha (Common liverwort).